Reading from the N-terminus, the 104-residue chain is Large ribosomal subunit protein bL21 (104 aa).

Belongs to the bacterial ribosomal protein bL21 family. Part of the 50S ribosomal subunit. Contacts protein L20.

In terms of biological role, this protein binds to 23S rRNA in the presence of protein L20. This is Large ribosomal subunit protein bL21 from Clostridium botulinum (strain 657 / Type Ba4).